Here is a 475-residue protein sequence, read N- to C-terminus: Putative F-box protein At3g58960 (475 aa).

Residues 1–49 (MDRISSLSNDIISNIVSFLSAKDAAVASVLSKRWQNIYTIVPNLEFDNT) enclose the F-box domain.

In Arabidopsis thaliana (Mouse-ear cress), this protein is Putative F-box protein At3g58960.